Reading from the N-terminus, the 616-residue chain is MRRFCRLLFLNSLLSISICKAQNPAHLVADEFKEHFNVEEKQLETVEELLLKMKKLAHSRSFAGREFGHDAVEDSKKEVAISTQQGTIDKKVSPFLFEGDIFLSRRQAVDILKALSKDKTKRLRRSFVSDKTATWKSLPIKYRFHESIDFYTISQIIAAIRFWEDSTCITFENVSDAPVGDYIEFFSGQGCYSMIGRNGGRQGISIGESCVKMGVIEHEIGHALGLWHEQSRPDALGYVSIERDFILPSYISDFLQRDDEIDTLGIPYDLGSVMHYGSTAFSVDQKSKTVVTRDSLYQQTIGQREKLSFYDVATINTAYCKEECKSEKTECEYGGYMRPSKCSECLCPDGLGGEKCEKNEDAKNAECGGILELSDEWKTIESPNYPDPGYEADQKCSWLLKAPKGKRVEIEFIEDFSFLCTSTCVDFVELKISDDLRNTGFRFCCYDKPEISFVSQIDTAIVIFRSQLSADIGFKIQVRSTESEPRTTIAPTIITTTMAPITVDTPNVWADWGEWSMCSRTCGGCGIRSRVRSCRSKKCEGRRQEFGTCNLKACPVDKHCAKLLSNNRLCNGKVCTKNDIAISSCDAPQCCPPFVNVDGMCQSDQENHHDELWLSI.

An N-terminal signal peptide occupies residues 1–21 (MRRFCRLLFLNSLLSISICKA). A propeptide spanning residues 22–125 (QNPAHLVADE…SKDKTKRLRR (104 aa)) is cleaved from the precursor. Residues 126-321 (SFVSDKTATW…VATINTAYCK (196 aa)) form the Peptidase M12A domain. Cystine bridges form between cysteine 168–cysteine 320, cysteine 191–cysteine 210, cysteine 324–cysteine 345, cysteine 347–cysteine 356, cysteine 367–cysteine 396, cysteine 424–cysteine 444, cysteine 518–cysteine 549, cysteine 522–cysteine 554, and cysteine 534–cysteine 539. N-linked (GlcNAc...) asparagine glycosylation occurs at asparagine 173. Histidine 218 lines the Zn(2+) pocket. The active site involves glutamate 219. Residues histidine 222 and histidine 228 each contribute to the Zn(2+) site. An EGF-like domain is found at 316-357 (NTAYCKEECKSEKTECEYGGYMRPSKCSECLCPDGLGGEKCE). In terms of domain architecture, CUB spans 367-481 (CGGILELSDE…IGFKIQVRST (115 aa)). Positions 506–555 (PNVWADWGEWSMCSRTCGGCGIRSRVRSCRSKKCEGRRQEFGTCNLKACP) constitute a TSP type-1 domain.

It depends on Zn(2+) as a cofactor.

The protein localises to the secreted. Mtalloprotease. Involved in molting, a process during larval stages in which a new cuticle is formed and the old cuticle is shed. This is Zinc metalloproteinase nas-36 from Caenorhabditis briggsae.